A 326-amino-acid chain; its full sequence is Transcription cofactor vestigial-like protein 3 (326 aa).

Residues 57-80 (VTLPSKQEEEDEEEEEEEKDQPAE) form a disordered region. Residue lysine 62 forms a Glycyl lysine isopeptide (Lys-Gly) (interchain with G-Cter in SUMO2) linkage. The segment covering 64–75 (EEEDEEEEEEEK) has biased composition (acidic residues). Lysine 126 is covalently cross-linked (Glycyl lysine isopeptide (Lys-Gly) (interchain with G-Cter in SUMO2)). 2 disordered regions span residues 175–203 (PPGT…PPAV) and 233–256 (HAHM…SALD). Positions 233 to 249 (HAHMHHRHRHHHHHHHP) are enriched in basic residues.

It belongs to the vestigial family. As to expression, enriched in placenta.

It is found in the nucleus. Functionally, may act as a specific coactivator for the mammalian TEFs. The sequence is that of Transcription cofactor vestigial-like protein 3 (VGLL3) from Homo sapiens (Human).